A 158-amino-acid chain; its full sequence is Snaclec crotocetin-1 (158 aa).

A signal peptide spans 1–23 (MGRFIFVSFGLLVVFLSLSGTGA). Cystine bridges form between C27–C38, C55–C152, and C127–C144. The C-type lectin domain maps to 34 to 153 (YDQYCYRVIK…CEEKNLFVCK (120 aa)).

Belongs to the snaclec family. Heterodimer; disulfide-linked. In terms of tissue distribution, expressed by the venom gland.

The protein localises to the secreted. Functionally, interferes with one step of hemostasis (modulation of platelet aggregation, or coagulation cascade, for example). The chain is Snaclec crotocetin-1 from Crotalus durissus terrificus (South American rattlesnake).